The following is a 317-amino-acid chain: CXXC-type zinc finger protein 5 (317 aa).

A compositionally biased stretch (low complexity) spans 1 to 49 (MSSLSSGPQDTGGSSSSSSNGSSGSGPKAGVADKSAAVAAAAPASVADD). Positions 1-96 (MSSLSSGPQD…GSGGGSMMGG (96 aa)) are disordered. Gly residues predominate over residues 83–94 (GGSGGSGGGSMM). The CXXC-type zinc finger occupies 251–292 (GKKKRKRCGMCAPCRRRINCEQCSSCRNRKTGHQICKFRKCE). The short motif at 252 to 257 (KKKRKR) is the Nuclear localization signal element. Zn(2+)-binding residues include Cys-258, Cys-261, Cys-264, Cys-270, Cys-273, Cys-276, Cys-286, and Cys-291.

As to quaternary structure, interacts with DVL1. Interacts with RBPJ.

It localises to the nucleus. It is found in the cytoplasm. Its function is as follows. May indirectly participate in activation of the NF-kappa-B and MAPK pathways. Acts as a mediator of BMP4-mediated modulation of canonical Wnt signaling activity in neural stem cells. Required for DNA damage-induced ATM phosphorylation, p53 activation and cell cycle arrest. Involved in myelopoiesis. Binds to the oxygen responsive element of COX4I2 and represses its transcription under hypoxia conditions (4% oxygen), as well as normoxia conditions (20% oxygen). May repress COX4I2 transactivation induced by CHCHD2 and RBPJ. Binds preferentially to DNA containing cytidine-phosphate-guanosine (CpG) dinucleotides over CpH (H=A, T, and C), hemimethylated-CpG and hemimethylated-hydroxymethyl-CpG. This chain is CXXC-type zinc finger protein 5 (CXXC5), found in Bos taurus (Bovine).